Reading from the N-terminus, the 281-residue chain is ATP phosphoribosyltransferase (281 aa).

The protein belongs to the ATP phosphoribosyltransferase family. Long subfamily. In terms of assembly, equilibrium between an active dimeric form, an inactive hexameric form and higher aggregates. Interconversion between the various forms is largely reversible and is influenced by the natural substrates and inhibitors of the enzyme. Mg(2+) is required as a cofactor.

It is found in the cytoplasm. It carries out the reaction 1-(5-phospho-beta-D-ribosyl)-ATP + diphosphate = 5-phospho-alpha-D-ribose 1-diphosphate + ATP. It participates in amino-acid biosynthesis; L-histidine biosynthesis; L-histidine from 5-phospho-alpha-D-ribose 1-diphosphate: step 1/9. With respect to regulation, feedback inhibited by histidine. Catalyzes the condensation of ATP and 5-phosphoribose 1-diphosphate to form N'-(5'-phosphoribosyl)-ATP (PR-ATP). Has a crucial role in the pathway because the rate of histidine biosynthesis seems to be controlled primarily by regulation of HisG enzymatic activity. This chain is ATP phosphoribosyltransferase, found in Mycolicibacterium gilvum (strain PYR-GCK) (Mycobacterium gilvum (strain PYR-GCK)).